A 446-amino-acid chain; its full sequence is Adenylosuccinate synthetase (446 aa).

Residues 20 to 26 (GDEGKGK) and 48 to 50 (GHT) contribute to the GTP site. Residue Asp-21 is the Proton acceptor of the active site. Mg(2+) is bound by residues Asp-21 and Gly-48. Residues 21–24 (DEGK), 46–49 (NAGH), Thr-137, Arg-151, Gln-232, Thr-247, and Arg-319 each bind IMP. The Proton donor role is filled by His-49. 315 to 321 (SVTGRPR) is a binding site for substrate. GTP contacts are provided by residues Arg-321, 347–349 (KLD), and 429–431 (STG).

This sequence belongs to the adenylosuccinate synthetase family. Homodimer. Mg(2+) serves as cofactor.

Its subcellular location is the cytoplasm. The enzyme catalyses IMP + L-aspartate + GTP = N(6)-(1,2-dicarboxyethyl)-AMP + GDP + phosphate + 2 H(+). The protein operates within purine metabolism; AMP biosynthesis via de novo pathway; AMP from IMP: step 1/2. Functionally, plays an important role in the de novo pathway of purine nucleotide biosynthesis. Catalyzes the first committed step in the biosynthesis of AMP from IMP. The protein is Adenylosuccinate synthetase of Ralstonia pickettii (strain 12J).